A 446-amino-acid chain; its full sequence is Coiled-coil domain-containing protein 112 (446 aa).

Coiled coils occupy residues 23–116 and 219–400; these read LEEL…RKID and ERKK…NVSR. Disordered regions lie at residues 247–277 and 394–430; these read NNTP…AVEA and VENN…LLHI. The segment covering 255-268 has biased composition (basic and acidic residues); it reads NKPEDNQKQKEEQR.

The protein resides in the cytoplasm. Its subcellular location is the cytoskeleton. The protein localises to the microtubule organizing center. It localises to the centrosome. It is found in the centriolar satellite. The protein is Coiled-coil domain-containing protein 112 (CCDC112) of Macaca fascicularis (Crab-eating macaque).